A 418-amino-acid polypeptide reads, in one-letter code: Deubiquitinase and deneddylase Dub1 (418 aa).

Residues 1-10 (MLSPTNSISK) show a composition bias toward polar residues. Positions 1–23 (MLSPTNSISKTAPVPPQDSSKPV) are disordered. Residues 40 to 60 (TALAVLLVVVTLGLILLFYSF) form a helical membrane-spanning segment. Residues 72-144 (TRPSTKEQPT…PLPPKAPKPV (73 aa)) form a disordered region. Residues 86–141 (VPLPSPPLAVPRPSTPPPPVISRPSTPPAPTPAISPPSTPSAPKPSTPPPLPPKAP) are compositionally biased toward pro residues. Active-site residues include His288, Asp305, and Cys358.

Belongs to the peptidase C48 family.

The protein localises to the secreted. It is found in the host cell. Its subcellular location is the membrane. In terms of biological role, effector proteins function to alter host cell physiology and promote bacterial survival in host tissues. This protease possesses deubiquitinating and deneddylating activities. This is Deubiquitinase and deneddylase Dub1 (cdu1) from Chlamydia trachomatis serovar B (strain Jali20/OT).